The following is a 446-amino-acid chain: Citrate/sodium symporter (446 aa).

The next 5 helical transmembrane spans lie at 23–43 (IFGM…LSHF), 46–66 (AIPT…AIFG), 79–99 (IGGA…AGIF), 110–130 (VMDK…GAIL), and 148–168 (ILAG…CFGI). Na(+)-binding residues include Ile181 and Gly183. Asn186 and Gly187 together coordinate citrate. Helical transmembrane passes span 213-233 (IAIL…LDMI), 267-287 (ETAV…VVAK), 289-309 (ILPS…LIVA), 335-355 (QLLW…QEII), and 364-384 (VIAA…GWLI). Na(+) contacts are provided by Met399 and Asn401. Arg402, Gly404, Ser405, and Arg428 together coordinate citrate. Residues 425–445 (ISSRLGGGIVLVIASIVFSMM) form a helical membrane-spanning segment.

This sequence belongs to the 2-hydroxycarboxylate transporter (2-HCT) (TC 2.A.24) family. Homodimer.

The protein localises to the cell inner membrane. The enzyme catalyses citrate(out) + 2 Na(+)(out) = citrate(in) + 2 Na(+)(in). In terms of biological role, secondary active transporter that catalyzes the uptake of citrate across the membrane with the concomitant uptake of sodium. Is specific for citrate. The chain is Citrate/sodium symporter from Salmonella pullorum.